The sequence spans 377 residues: Cytochrome b (377 aa).

A run of 4 helical transmembrane segments spans residues 33 to 53 (FGSL…FLAM), 77 to 98 (WLIR…YLHT), 113 to 133 (WTMG…GYVL), and 178 to 198 (FFMI…VHLL). Heme b is bound by residues histidine 83 and histidine 97. Histidine 182 and histidine 196 together coordinate heme b. An a ubiquinone-binding site is contributed by histidine 201. Helical transmembrane passes span 226 to 246 (YKDL…SLLS), 288 to 308 (LGGV…PLSS), 320 to 340 (FNQI…WIGA), and 347 to 367 (FIIM…LNPM).

The protein belongs to the cytochrome b family. In terms of assembly, the main subunits of complex b-c1 are: cytochrome b, cytochrome c1 and the Rieske protein. It depends on heme b as a cofactor.

The protein resides in the mitochondrion inner membrane. Its function is as follows. Component of the ubiquinol-cytochrome c reductase complex (complex III or cytochrome b-c1 complex) that is part of the mitochondrial respiratory chain. The b-c1 complex mediates electron transfer from ubiquinol to cytochrome c. Contributes to the generation of a proton gradient across the mitochondrial membrane that is then used for ATP synthesis. The polypeptide is Cytochrome b (MT-CYB) (Tetrodontophora bielanensis (Giant springtail)).